The following is a 260-amino-acid chain: Ubiquinone/menaquinone biosynthesis C-methyltransferase UbiE (260 aa).

S-adenosyl-L-methionine-binding positions include threonine 83, aspartate 104, 132–133, and serine 149; that span reads NA.

The protein belongs to the class I-like SAM-binding methyltransferase superfamily. MenG/UbiE family.

It catalyses the reaction a 2-demethylmenaquinol + S-adenosyl-L-methionine = a menaquinol + S-adenosyl-L-homocysteine + H(+). The catalysed reaction is a 2-methoxy-6-(all-trans-polyprenyl)benzene-1,4-diol + S-adenosyl-L-methionine = a 5-methoxy-2-methyl-3-(all-trans-polyprenyl)benzene-1,4-diol + S-adenosyl-L-homocysteine + H(+). It participates in quinol/quinone metabolism; menaquinone biosynthesis; menaquinol from 1,4-dihydroxy-2-naphthoate: step 2/2. The protein operates within cofactor biosynthesis; ubiquinone biosynthesis. Functionally, methyltransferase required for the conversion of demethylmenaquinol (DMKH2) to menaquinol (MKH2) and the conversion of 2-polyprenyl-6-methoxy-1,4-benzoquinol (DDMQH2) to 2-polyprenyl-3-methyl-6-methoxy-1,4-benzoquinol (DMQH2). The sequence is that of Ubiquinone/menaquinone biosynthesis C-methyltransferase UbiE from Vibrio cholerae serotype O1 (strain ATCC 39315 / El Tor Inaba N16961).